Consider the following 675-residue polypeptide: PTS system glucose-specific EIICBA component (675 aa).

A PTS EIIC type-1 domain is found at 3 to 414 (KKLFGQMQRI…FNYKTPGRED (412 aa)). A run of 11 helical transmembrane segments spans residues 16 to 36 (LMLPVAILPAAGLLLAIGTAF), 59 to 79 (MLTGAGGIIFDNLPIIFALGV), 81 to 101 (IGLAGGDGVAAIAAFVGFIIL), 126 to 146 (VLGIPTLQTGVFGGIIIGALA), 170 to 190 (FVPIMMATTSFILAFPMAIIW), 211 to 231 (LAVFLFGFIKRLLIPFGLHHI), 273 to 293 (FMQGEFPVMMFGLPAAALAIY), 303 to 323 (VVAGLMISAALTSFLTGITEP), 328 to 348 (FLFVAPFLFVIHAVLDGLSFL), 355 to 375 (VHLGYTFSGGFIDYVLLGILP), and 378 to 398 (TAWWLVIPVGIIYAVIYYFVF). A PTS EIIB type-1 domain is found at 425–506 (SQLPFDVLKA…AKIISGEITK (82 aa)). Residue C447 is the Phosphocysteine intermediate; for EIIB activity of the active site. A PTS EIIA type-1 domain is found at 547–651 (DKVFSEKMMG…SIITPVIITN (105 aa)). The active-site Tele-phosphohistidine intermediate; for EIIA activity is the H599.

It localises to the cell membrane. The catalysed reaction is N(pros)-phospho-L-histidyl-[protein] + D-glucose(out) = D-glucose 6-phosphate(in) + L-histidyl-[protein]. In terms of biological role, the phosphoenolpyruvate-dependent sugar phosphotransferase system (sugar PTS), a major carbohydrate active transport system, catalyzes the phosphorylation of incoming sugar substrates concomitantly with their translocation across the cell membrane. This system is involved in glucose transport. The chain is PTS system glucose-specific EIICBA component (ptsG) from Staphylococcus epidermidis.